The chain runs to 479 residues: Aspartyl/glutamyl-tRNA(Asn/Gln) amidotransferase subunit B (479 aa).

Belongs to the GatB/GatE family. GatB subfamily. Heterotrimer of A, B and C subunits.

It carries out the reaction L-glutamyl-tRNA(Gln) + L-glutamine + ATP + H2O = L-glutaminyl-tRNA(Gln) + L-glutamate + ADP + phosphate + H(+). The catalysed reaction is L-aspartyl-tRNA(Asn) + L-glutamine + ATP + H2O = L-asparaginyl-tRNA(Asn) + L-glutamate + ADP + phosphate + 2 H(+). Functionally, allows the formation of correctly charged Asn-tRNA(Asn) or Gln-tRNA(Gln) through the transamidation of misacylated Asp-tRNA(Asn) or Glu-tRNA(Gln) in organisms which lack either or both of asparaginyl-tRNA or glutaminyl-tRNA synthetases. The reaction takes place in the presence of glutamine and ATP through an activated phospho-Asp-tRNA(Asn) or phospho-Glu-tRNA(Gln). The chain is Aspartyl/glutamyl-tRNA(Asn/Gln) amidotransferase subunit B from Streptococcus pyogenes serotype M3 (strain ATCC BAA-595 / MGAS315).